The following is a 467-amino-acid chain: 3-isopropylmalate dehydratase large subunit (467 aa).

Positions 347, 407, and 410 each coordinate [4Fe-4S] cluster.

It belongs to the aconitase/IPM isomerase family. LeuC type 1 subfamily. Heterodimer of LeuC and LeuD. It depends on [4Fe-4S] cluster as a cofactor.

It catalyses the reaction (2R,3S)-3-isopropylmalate = (2S)-2-isopropylmalate. The protein operates within amino-acid biosynthesis; L-leucine biosynthesis; L-leucine from 3-methyl-2-oxobutanoate: step 2/4. In terms of biological role, catalyzes the isomerization between 2-isopropylmalate and 3-isopropylmalate, via the formation of 2-isopropylmaleate. In Nostoc sp. (strain PCC 7120 / SAG 25.82 / UTEX 2576), this protein is 3-isopropylmalate dehydratase large subunit.